A 191-amino-acid polypeptide reads, in one-letter code: MKIGVIAMQGAFREHEQTLARLGVETLRIRRPEQLSQIDGIIIPGGESTTIGKLLGDFNLMEPLRERILSGLPVFGTCAGMILLAKEIENSNQPRIGTMDIKVARNAFGRQVDSFEVDLEIPEVGQEPVRAVFIRAPYILEVKPSVQVLAKVDDKIVMARQDNMLVSAFHPELTDDLRIHRYFIEKVCKGL.

Position 46 to 48 (46 to 48) interacts with L-glutamine; sequence GES. Cys78 (nucleophile) is an active-site residue. Residues Arg105 and 134 to 135 each bind L-glutamine; that span reads IR. Residues His170 and Glu172 each act as charge relay system in the active site.

This sequence belongs to the glutaminase PdxT/SNO family. In terms of assembly, in the presence of PdxS, forms a dodecamer of heterodimers. Only shows activity in the heterodimer.

It carries out the reaction aldehydo-D-ribose 5-phosphate + D-glyceraldehyde 3-phosphate + L-glutamine = pyridoxal 5'-phosphate + L-glutamate + phosphate + 3 H2O + H(+). It catalyses the reaction L-glutamine + H2O = L-glutamate + NH4(+). The protein operates within cofactor biosynthesis; pyridoxal 5'-phosphate biosynthesis. Its function is as follows. Catalyzes the hydrolysis of glutamine to glutamate and ammonia as part of the biosynthesis of pyridoxal 5'-phosphate. The resulting ammonia molecule is channeled to the active site of PdxS. This Carboxydothermus hydrogenoformans (strain ATCC BAA-161 / DSM 6008 / Z-2901) protein is Pyridoxal 5'-phosphate synthase subunit PdxT.